The following is a 446-amino-acid chain: Glucose-1-phosphate adenylyltransferase (446 aa).

Alpha-D-glucose 1-phosphate-binding positions include Tyr-119, Gly-184, 199–200 (EK), and Ser-217.

It belongs to the bacterial/plant glucose-1-phosphate adenylyltransferase family. As to quaternary structure, homotetramer.

It carries out the reaction alpha-D-glucose 1-phosphate + ATP + H(+) = ADP-alpha-D-glucose + diphosphate. The protein operates within glycan biosynthesis; glycogen biosynthesis. Functionally, involved in the biosynthesis of ADP-glucose, a building block required for the elongation reactions to produce glycogen. Catalyzes the reaction between ATP and alpha-D-glucose 1-phosphate (G1P) to produce pyrophosphate and ADP-Glc. This is Glucose-1-phosphate adenylyltransferase from Rhodopirellula baltica (strain DSM 10527 / NCIMB 13988 / SH1).